The sequence spans 220 residues: Iron-sulfur cluster repair protein YtfE (220 aa).

It belongs to the RIC family. YtfE subfamily. In terms of assembly, homodimer.

Its subcellular location is the cytoplasm. Its function is as follows. Di-iron-containing protein involved in the repair of iron-sulfur clusters damaged by oxidative and nitrosative stress conditions. The sequence is that of Iron-sulfur cluster repair protein YtfE from Escherichia coli O8 (strain IAI1).